A 205-amino-acid polypeptide reads, in one-letter code: SREBP regulating gene protein (205 aa).

The Cytoplasmic portion of the chain corresponds to 1–16 (MVPCGAVLWRRLLRKR). Residues 17–35 (WVLGVVFGLSLVYFLSSTF) traverse the membrane as a helical segment. Topologically, residues 36 to 205 (KQEERTVRDR…GEYPPELLPV (170 aa)) are lumenal. Residue Asn67 is glycosylated (N-linked (GlcNAc...) asparagine).

Belongs to the SPRING family.

The protein resides in the golgi apparatus membrane. Positively regulates hepatic SREBP signaling pathway by modulating the proper localization of SCAP (SREBP cleavage-activating protein) to the endoplasmic reticulum, thereby controlling the level of functional SCAP. This is SREBP regulating gene protein from Gallus gallus (Chicken).